The sequence spans 606 residues: Vitamin B12 transporter BtuB (606 aa).

Residues 1–21 form the signal peptide; that stretch reads MKKTLLAVALAPLCLPSQVFA. Positions 28–35 match the TonB box motif; that stretch reads DVMVVTAN. The region spanning 40–152 is the TBDR plug domain; sequence PIKNVIAPIS…IGGVLNIITA (113 aa). The region spanning 157–606 is the TBDR beta-barrel domain; the sequence is ESVAEVTAGG…SYYATATYKF (450 aa). The short motif at 589–606 is the TonB C-terminal box element; sequence ETYNVQERSYYATATYKF.

It belongs to the TonB-dependent receptor family. BtuB (TC 1.B.14.3.1) subfamily.

The protein localises to the cell outer membrane. Its function is as follows. Involved in the active translocation of vitamin B12 (cyanocobalamin) across the outer membrane to the periplasmic space. It derives its energy for transport by interacting with the trans-periplasmic membrane protein TonB. The polypeptide is Vitamin B12 transporter BtuB (Photobacterium profundum (strain SS9)).